The sequence spans 415 residues: Dynein assembly factor with WD repeat domains 1 (415 aa).

WD repeat units follow at residues 90–129, 132–174, 175–214, 217–256, 259–298, 301–340, 343–384, and 386–415; these read AHIL…ELNT, GHRN…HTFR, GHTA…EVYT, GHSA…KVNI, GHCA…CVAT, GHDD…CIAK, GHEG…QVLE, and HTDE…RIWR.

This sequence belongs to the WD repeat WDR69 family. In terms of assembly, interacts with IFT46.

The protein localises to the cytoplasm. It is found in the cytoskeleton. Its subcellular location is the flagellum basal body. The protein resides in the flagellum axoneme. Functionally, required for axonemal dynein assembly and ciliary motility in ciliated organs, including Kupffer's vesicle, during embryogenesis. Facilitates the onset of robust cilia motility during development. This chain is Dynein assembly factor with WD repeat domains 1, found in Homo sapiens (Human).